A 245-amino-acid polypeptide reads, in one-letter code: Probable phosphatase PC1_1798 (245 aa).

Zn(2+)-binding residues include His7, His9, His15, His40, Glu73, His101, His131, Asp192, and His194.

This sequence belongs to the PHP family. In terms of assembly, homotrimer. Zn(2+) is required as a cofactor.

In Pectobacterium carotovorum subsp. carotovorum (strain PC1), this protein is Probable phosphatase PC1_1798.